Consider the following 340-residue polypeptide: Deubiquitinase SseL (340 aa).

The active site involves His-223. The active-site Nucleophile is the Cys-285.

The protein belongs to the peptidase C79 family.

Its subcellular location is the secreted. It is found in the host cytoplasm. Effector proteins function to alter host cell physiology and promote bacterial survival in host tissues. This protease targets the host cell ubiquitin pathway by acting as a deubiquitinase in infected host cells. The polypeptide is Deubiquitinase SseL (sseL) (Salmonella choleraesuis (strain SC-B67)).